The chain runs to 459 residues: MSNFAIILAAGKGTRMKSDLPKVLHKVAGISMLEHVFRSVGAIQPEKTVTVVGHKAELVEEVLAGQTEFVTQSEQLGTGHAVMMTEPILEGLSGHTLVIAGDTPLITGESLKNLIDFHINHKNVATILTAETDNPFGYGRIVRNDNAEVLRIVEQKDATDFEKQIKEINTGTYVFDNERLFEALKNINTNNAQGEYYITDVIGIFRETGEKVGAYTLKDFDESLGVNDRVALATAESVMRRRINHKHMVNGVSFVNPEATYIDIDVEIALEVQIEANVTLKGQTKIGAETVLTNGTYVVDSTIGAGAVITNSMIEESSVADGVTVGPYAHIRPNSSLGAQVHIGNFVEVKGSSIGENTKAGHLTYIGNCEVGSNVNFGAGTITVNYDGKNKYKTVIGDNVFVGSNSTIIAPVELGDNSLVGAGSTITKDVPADAIAIGRGRQINKDEYATRLPHHPKNQ.

Residues 1–229 (MSNFAIILAA…FDESLGVNDR (229 aa)) form a pyrophosphorylase region. UDP-N-acetyl-alpha-D-glucosamine-binding positions include 8-11 (LAAG), K22, Q72, and 77-78 (GT). D102 serves as a coordination point for Mg(2+). Positions 139, 154, 169, and 227 each coordinate UDP-N-acetyl-alpha-D-glucosamine. Mg(2+) is bound at residue N227. The interval 230–250 (VALATAESVMRRRINHKHMVN) is linker. The N-acetyltransferase stretch occupies residues 251 to 459 (GVSFVNPEAT…TRLPHHPKNQ (209 aa)). Residues R332 and K350 each coordinate UDP-N-acetyl-alpha-D-glucosamine. The active-site Proton acceptor is H362. The UDP-N-acetyl-alpha-D-glucosamine site is built by Y365 and N376. Residues A379, 385–386 (NY), S404, A422, and R439 each bind acetyl-CoA.

It in the N-terminal section; belongs to the N-acetylglucosamine-1-phosphate uridyltransferase family. In the C-terminal section; belongs to the transferase hexapeptide repeat family. In terms of assembly, homotrimer. Mg(2+) is required as a cofactor.

It localises to the cytoplasm. It catalyses the reaction alpha-D-glucosamine 1-phosphate + acetyl-CoA = N-acetyl-alpha-D-glucosamine 1-phosphate + CoA + H(+). It carries out the reaction N-acetyl-alpha-D-glucosamine 1-phosphate + UTP + H(+) = UDP-N-acetyl-alpha-D-glucosamine + diphosphate. Its pathway is nucleotide-sugar biosynthesis; UDP-N-acetyl-alpha-D-glucosamine biosynthesis; N-acetyl-alpha-D-glucosamine 1-phosphate from alpha-D-glucosamine 6-phosphate (route II): step 2/2. The protein operates within nucleotide-sugar biosynthesis; UDP-N-acetyl-alpha-D-glucosamine biosynthesis; UDP-N-acetyl-alpha-D-glucosamine from N-acetyl-alpha-D-glucosamine 1-phosphate: step 1/1. It participates in bacterial outer membrane biogenesis; LPS lipid A biosynthesis. Its function is as follows. Catalyzes the last two sequential reactions in the de novo biosynthetic pathway for UDP-N-acetylglucosamine (UDP-GlcNAc). The C-terminal domain catalyzes the transfer of acetyl group from acetyl coenzyme A to glucosamine-1-phosphate (GlcN-1-P) to produce N-acetylglucosamine-1-phosphate (GlcNAc-1-P), which is converted into UDP-GlcNAc by the transfer of uridine 5-monophosphate (from uridine 5-triphosphate), a reaction catalyzed by the N-terminal domain. The protein is Bifunctional protein GlmU of Streptococcus pneumoniae (strain JJA).